The chain runs to 129 residues: Large ribosomal subunit protein uL22 (129 aa).

This sequence belongs to the universal ribosomal protein uL22 family. In terms of assembly, part of the 50S ribosomal subunit.

This protein binds specifically to 23S rRNA; its binding is stimulated by other ribosomal proteins, e.g. L4, L17, and L20. It is important during the early stages of 50S assembly. It makes multiple contacts with different domains of the 23S rRNA in the assembled 50S subunit and ribosome. In terms of biological role, the globular domain of the protein is located near the polypeptide exit tunnel on the outside of the subunit, while an extended beta-hairpin is found that lines the wall of the exit tunnel in the center of the 70S ribosome. This chain is Large ribosomal subunit protein uL22, found in Phytoplasma sp. (strain STRAWB2).